A 676-amino-acid polypeptide reads, in one-letter code: Methionine--tRNA ligase (676 aa).

A 'HIGH' region motif is present at residues P15–H25. Zn(2+)-binding residues include C146, C149, C159, and C162. The short motif at K332–S336 is the 'KMSKS' region element. K335 lines the ATP pocket. Positions D575–K676 constitute a tRNA-binding domain.

It belongs to the class-I aminoacyl-tRNA synthetase family. MetG type 1 subfamily. Homodimer. Zn(2+) serves as cofactor.

It localises to the cytoplasm. The enzyme catalyses tRNA(Met) + L-methionine + ATP = L-methionyl-tRNA(Met) + AMP + diphosphate. Is required not only for elongation of protein synthesis but also for the initiation of all mRNA translation through initiator tRNA(fMet) aminoacylation. In Shewanella sp. (strain MR-4), this protein is Methionine--tRNA ligase.